Reading from the N-terminus, the 317-residue chain is Acetyl-coenzyme A carboxylase carboxyl transferase subunit alpha (317 aa).

Positions 40-293 (LEGRVRDAMV…ETVIGDALKE (254 aa)) constitute a CoA carboxyltransferase C-terminal domain.

This sequence belongs to the AccA family. Acetyl-CoA carboxylase is a heterohexamer composed of biotin carboxyl carrier protein (AccB), biotin carboxylase (AccC) and two subunits each of ACCase subunit alpha (AccA) and ACCase subunit beta (AccD).

The protein resides in the cytoplasm. The enzyme catalyses N(6)-carboxybiotinyl-L-lysyl-[protein] + acetyl-CoA = N(6)-biotinyl-L-lysyl-[protein] + malonyl-CoA. Its pathway is lipid metabolism; malonyl-CoA biosynthesis; malonyl-CoA from acetyl-CoA: step 1/1. Its function is as follows. Component of the acetyl coenzyme A carboxylase (ACC) complex. First, biotin carboxylase catalyzes the carboxylation of biotin on its carrier protein (BCCP) and then the CO(2) group is transferred by the carboxyltransferase to acetyl-CoA to form malonyl-CoA. The polypeptide is Acetyl-coenzyme A carboxylase carboxyl transferase subunit alpha (Rhizobium meliloti (strain 1021) (Ensifer meliloti)).